The chain runs to 184 residues: MSWRSEHIWIELLPGSRKISNFCWAFILFLGSLGFLLVGISSYLGRNLISFFPSQQIIFFPQGIVMSFYGIAGLFISSYLWCTISWNVGSGYDLFDRREGIVCIFRWGFPGRNRRIFLRFLIKDIRSVRIEVKEGIYARRVLYMDIRGQRAIPLTRTDENLTPGEIEKKAAELAYFLRVPIEVF.

The next 2 helical transmembrane spans lie at 22 to 42 and 57 to 77; these read FCWA…GISS and IIFF…LFIS.

Belongs to the Ycf4 family.

It localises to the plastid. The protein resides in the chloroplast thylakoid membrane. In terms of biological role, seems to be required for the assembly of the photosystem I complex. The chain is Photosystem I assembly protein Ycf4 from Ipomoea purpurea (Common morning glory).